We begin with the raw amino-acid sequence, 511 residues long: Histidine ammonia-lyase (511 aa).

Positions 142–144 (ASG) form a cross-link, 5-imidazolinone (Ala-Gly). Serine 143 is modified (2,3-didehydroalanine (Ser)).

This sequence belongs to the PAL/histidase family. Post-translationally, contains an active site 4-methylidene-imidazol-5-one (MIO), which is formed autocatalytically by cyclization and dehydration of residues Ala-Ser-Gly.

Its subcellular location is the cytoplasm. It catalyses the reaction L-histidine = trans-urocanate + NH4(+). Its pathway is amino-acid degradation; L-histidine degradation into L-glutamate; N-formimidoyl-L-glutamate from L-histidine: step 1/3. This Phenylobacterium zucineum (strain HLK1) protein is Histidine ammonia-lyase.